The primary structure comprises 251 residues: Octanoyltransferase (251 aa).

Residues 29 to 251 enclose the BPL/LPL catalytic domain; it reads AATPNSLWIC…GQKLSSYLAP (223 aa). 68-75 contributes to the substrate binding site; it reads RGGQVTYH. Positions 137–174 are disordered; that stretch reads ARLRPSPQPSPKGRGSSTPVLLPPLPGEGGGGGGPDPD. Residues 184 to 186 and 197 to 199 each bind substrate; these read ALG and GVA. The active-site Acyl-thioester intermediate is the Cys215.

Belongs to the LipB family.

Its subcellular location is the cytoplasm. The catalysed reaction is octanoyl-[ACP] + L-lysyl-[protein] = N(6)-octanoyl-L-lysyl-[protein] + holo-[ACP] + H(+). Its pathway is protein modification; protein lipoylation via endogenous pathway; protein N(6)-(lipoyl)lysine from octanoyl-[acyl-carrier-protein]: step 1/2. Catalyzes the transfer of endogenously produced octanoic acid from octanoyl-acyl-carrier-protein onto the lipoyl domains of lipoate-dependent enzymes. Lipoyl-ACP can also act as a substrate although octanoyl-ACP is likely to be the physiological substrate. The sequence is that of Octanoyltransferase from Polaromonas sp. (strain JS666 / ATCC BAA-500).